A 360-amino-acid polypeptide reads, in one-letter code: UPF0324 membrane protein plu2856 (360 aa).

9 consecutive transmembrane segments (helical) span residues 20-42 (LIPG…NIPW), 47-69 (GLGT…YPLL), 104-126 (VGIT…AIWL), 136-155 (QTVI…AIMA), 167-189 (VAVA…PWFY), 239-256 (MIRV…SRYI), 277-299 (WFAV…AAIV), 304-326 (NIDT…VSAI), and 333-355 (PILL…NLGI).

This sequence belongs to the UPF0324 family.

Its subcellular location is the cell membrane. The sequence is that of UPF0324 membrane protein plu2856 from Photorhabdus laumondii subsp. laumondii (strain DSM 15139 / CIP 105565 / TT01) (Photorhabdus luminescens subsp. laumondii).